A 211-amino-acid polypeptide reads, in one-letter code: 3-demethoxyubiquinol 3-hydroxylase (211 aa).

The disordered stretch occupies residues 22 to 43; it reads KHPLNPNRKSPSANTVDGQLSD. Over residues 28–42 the composition is skewed to polar residues; sequence NRKSPSANTVDGQLS. Residues E60, E90, H93, E142, E174, and H177 each coordinate Fe cation.

This sequence belongs to the COQ7 family. It depends on Fe cation as a cofactor.

It is found in the cell membrane. The enzyme catalyses a 5-methoxy-2-methyl-3-(all-trans-polyprenyl)benzene-1,4-diol + AH2 + O2 = a 3-demethylubiquinol + A + H2O. It functions in the pathway cofactor biosynthesis; ubiquinone biosynthesis. In terms of biological role, catalyzes the hydroxylation of 2-nonaprenyl-3-methyl-6-methoxy-1,4-benzoquinol during ubiquinone biosynthesis. The chain is 3-demethoxyubiquinol 3-hydroxylase from Francisella philomiragia subsp. philomiragia (strain ATCC 25017 / CCUG 19701 / FSC 153 / O#319-036).